Consider the following 123-residue polypeptide: Small ribosomal subunit protein uS12 (123 aa).

Asp89 is modified (3-methylthioaspartic acid). The interval 101–123 (TLDTSGVSDRRQSRSKYGAKRPK) is disordered. Residues 113-123 (SRSKYGAKRPK) are compositionally biased toward basic residues.

Belongs to the universal ribosomal protein uS12 family. Part of the 30S ribosomal subunit. Contacts proteins S8 and S17. May interact with IF1 in the 30S initiation complex.

Its function is as follows. With S4 and S5 plays an important role in translational accuracy. Functionally, interacts with and stabilizes bases of the 16S rRNA that are involved in tRNA selection in the A site and with the mRNA backbone. Located at the interface of the 30S and 50S subunits, it traverses the body of the 30S subunit contacting proteins on the other side and probably holding the rRNA structure together. The combined cluster of proteins S8, S12 and S17 appears to hold together the shoulder and platform of the 30S subunit. The protein is Small ribosomal subunit protein uS12 of Solidesulfovibrio magneticus (strain ATCC 700980 / DSM 13731 / RS-1) (Desulfovibrio magneticus).